The sequence spans 427 residues: 3-isopropylmalate dehydratase large subunit (427 aa).

C308, C368, and C371 together coordinate [4Fe-4S] cluster.

It belongs to the aconitase/IPM isomerase family. LeuC type 2 subfamily. In terms of assembly, heterodimer of LeuC and LeuD. [4Fe-4S] cluster serves as cofactor.

It carries out the reaction (2R,3S)-3-isopropylmalate = (2S)-2-isopropylmalate. Its pathway is amino-acid biosynthesis; L-leucine biosynthesis; L-leucine from 3-methyl-2-oxobutanoate: step 2/4. Functionally, catalyzes the isomerization between 2-isopropylmalate and 3-isopropylmalate, via the formation of 2-isopropylmaleate. The sequence is that of 3-isopropylmalate dehydratase large subunit from Geotalea uraniireducens (strain Rf4) (Geobacter uraniireducens).